Here is a 427-residue protein sequence, read N- to C-terminus: Enolase (427 aa).

Gln163 contacts (2R)-2-phosphoglycerate. Glu205 (proton donor) is an active-site residue. Positions 242, 285, and 312 each coordinate Mg(2+). (2R)-2-phosphoglycerate is bound by residues Lys337, Arg366, Ser367, and Lys388. Lys337 (proton acceptor) is an active-site residue.

The protein belongs to the enolase family. It depends on Mg(2+) as a cofactor.

The protein localises to the cytoplasm. Its subcellular location is the secreted. It is found in the cell surface. It carries out the reaction (2R)-2-phosphoglycerate = phosphoenolpyruvate + H2O. The protein operates within carbohydrate degradation; glycolysis; pyruvate from D-glyceraldehyde 3-phosphate: step 4/5. Its function is as follows. Catalyzes the reversible conversion of 2-phosphoglycerate (2-PG) into phosphoenolpyruvate (PEP). It is essential for the degradation of carbohydrates via glycolysis. This is Enolase from Paraburkholderia xenovorans (strain LB400).